Here is a 407-residue protein sequence, read N- to C-terminus: Histidine--tRNA ligase (407 aa).

It belongs to the class-II aminoacyl-tRNA synthetase family. In terms of assembly, homodimer.

It is found in the cytoplasm. The catalysed reaction is tRNA(His) + L-histidine + ATP = L-histidyl-tRNA(His) + AMP + diphosphate + H(+). The polypeptide is Histidine--tRNA ligase (Wolbachia pipientis subsp. Culex pipiens (strain wPip)).